The primary structure comprises 268 residues: Hydroxyacylglutathione hydrolase (268 aa).

Histidine 56, histidine 58, aspartate 60, histidine 61, histidine 113, aspartate 130, and histidine 168 together coordinate Zn(2+).

This sequence belongs to the metallo-beta-lactamase superfamily. Glyoxalase II family. As to quaternary structure, monomer. The cofactor is Zn(2+).

The enzyme catalyses an S-(2-hydroxyacyl)glutathione + H2O = a 2-hydroxy carboxylate + glutathione + H(+). Its pathway is secondary metabolite metabolism; methylglyoxal degradation; (R)-lactate from methylglyoxal: step 2/2. Thiolesterase that catalyzes the hydrolysis of S-D-lactoyl-glutathione to form glutathione and D-lactic acid. This is Hydroxyacylglutathione hydrolase from Hydrogenovibrio crunogenus (strain DSM 25203 / XCL-2) (Thiomicrospira crunogena).